A 320-amino-acid chain; its full sequence is SUMO-activating enzyme subunit 1B-1 (320 aa).

M1 is modified (N-acetylmethionine).

This sequence belongs to the ubiquitin-activating E1 family. Heterodimer of SAE1A or SAE1B and SAE2. The complex binds SUMO proteins via SAE2.

It is found in the nucleus. It functions in the pathway protein modification; protein sumoylation. The dimeric enzyme acts as an E1 ligase for SUMO1 and SUMO2. It mediates ATP-dependent activation of SUMO proteins and formation of a thioester with a conserved cysteine residue on SAE2. Functionally redundant with its paralog SAE1A. The protein is SUMO-activating enzyme subunit 1B-1 (SAE1B-1) of Arabidopsis thaliana (Mouse-ear cress).